The following is a 1072-amino-acid chain: Neurofilament heavy polypeptide (1072 aa).

Ser74 is subject to Phosphoserine. One can recognise an IF rod domain in the interval Glu94–Ile409. Coiled-coil stretches lie at residues Leu98–Gln132, Ile174–Glu222, and Leu293–Glu380. The segment at Thr278–Pro643 is 55 X 6 AA approximate tandem repeats of K-S-P-[VAGSE]-[KEVTSGA]-[EAVK]. Phosphoserine occurs at positions 343, 414, and 417. Residues Glu454–Lys1072 are disordered. Residues Glu455–Glu487 are compositionally biased toward acidic residues. A compositionally biased stretch (low complexity) spans Glu488 to Ala499. Ser501 is modified (phosphoserine). The segment covering Ser501–Ala584 has biased composition (basic and acidic residues). Tandem repeats lie at residues Lys507–Glu512, Lys515–Ala520, Lys521–Ala526, Lys527–Ala532, Lys533–Val538, Lys539–Val544, Lys545–Ala550, Lys551–Ala556, Lys557–Val562, Lys563–Val568, Lys569–Ala574, Lys575–Ala580, Lys581–Val586, Lys587–Val592, Lys593–Ala598, Lys599–Ala604, Lys605–Val610, Lys611–Ala616, Lys617–Ala622, Lys623–Val628, Lys629–Ala634, Lys635–Ala640, Lys641–Val646, Lys647–Val652, Lys653–Ala658, Lys659–Val664, Lys665–Val670, Lys671–Ala676, Lys677–Val682, Lys683–Val688, Lys689–Ala694, Lys695–Ala700, Lys701–Ala706, Lys707–Ala712, Lys713–Ala718, and Lys719–Ala724. 37 positions are modified to phosphoserine: Ser516, Ser522, Ser528, Ser534, Ser540, Ser546, Ser552, Ser558, Ser564, Ser570, Ser576, Ser582, Ser588, Ser594, Ser600, Ser606, Ser612, Ser618, Ser624, Ser627, Ser630, Ser636, Ser642, Ser648, Ser654, Ser660, Ser666, Ser672, Ser678, Ser684, Ser687, Ser690, Ser696, Ser702, Ser708, Ser714, and Ser720. Positions Ser600–Ala620 are enriched in basic and acidic residues. Over residues Glu621–Pro631 the composition is skewed to low complexity. Residues Ser720 to Ala774 are compositionally biased toward basic and acidic residues. The 37; approximate repeat unit spans residues Lys725–Ala730. A run of 7 repeats spans residues Lys731–Ala736, Lys737–Ala742, Lys743–Ala748, Lys749–Ala754, Lys755–Val760, Lys761–Ala766, and Lys767–Glu772. Ser732, Ser738, Ser744, Ser750, Ser756, and Ser762 each carry phosphoserine. The 45; approximate repeat unit spans residues Lys775 to Ala780. Ser776, Ser782, and Ser788 each carry phosphoserine. 2 repeat units span residues Lys781–Ala786 and Lys787–Glu792. Basic and acidic residues-rich tracts occupy residues Lys781–Ala953 and Gly963–Lys1072. The 48; approximate repeat unit spans residues Lys795–Val800. A run of 4 repeats spans residues Lys801 to Ala806, Lys807 to Glu812, Lys815 to Ala820, and Lys826 to Lys831. Phosphoserine is present on residues Ser802, Ser808, Ser816, and Ser827. A Phosphothreonine modification is found at Thr832. A phosphoserine mark is found at Ser846, Ser852, Ser860, Ser880, and Ser937. A run of 3 repeats spans residues Lys851 to Glu856, Lys859 to Glu864, and Lys879 to Glu884.

The protein belongs to the intermediate filament family. Forms heterodimers with NEFL; which can further hetero-oligomerize (in vitro). Forms heterodimers with INA (in vitro). In terms of processing, there are a number of repeats of the tripeptide K-S-P, NFH is phosphorylated on a number of the serines in this motif. It is thought that phosphorylation of NFH results in the formation of interfilament cross bridges that are important in the maintenance of axonal caliber. Phosphorylation seems to play a major role in the functioning of the larger neurofilament polypeptides (NF-M and NF-H), the levels of phosphorylation being altered developmentally and coincidentally with a change in the neurofilament function. Post-translationally, phosphorylated in the head and rod regions by the PKC kinase PKN1, leading to the inhibition of polymerization. As to expression, expressed in the dorsal root ganglion neurons (at protein level). Expressed in cutaneous and muscular sensory neurons.

It is found in the cytoplasm. The protein localises to the cytoskeleton. The protein resides in the cell projection. Its subcellular location is the axon. In terms of biological role, neurofilaments usually contain three intermediate filament proteins: NEFL, NEFM, and NEFH which are involved in the maintenance of neuronal caliber. NEFH has an important function in mature axons that is not subserved by the two smaller NEF proteins. May additionally cooperate with the neuronal intermediate filament proteins PRPH and INA to form neuronal filamentous networks. The polypeptide is Neurofilament heavy polypeptide (Nefh) (Rattus norvegicus (Rat)).